Consider the following 467-residue polypeptide: UPF0236 protein TTE0610/TTE0881/TTE1053/TTE2432 (467 aa).

It belongs to the UPF0236 family.

This Caldanaerobacter subterraneus subsp. tengcongensis (strain DSM 15242 / JCM 11007 / NBRC 100824 / MB4) (Thermoanaerobacter tengcongensis) protein is UPF0236 protein TTE0610/TTE0881/TTE1053/TTE2432.